Reading from the N-terminus, the 83-residue chain is Toxin CjTL8 (83 aa).

Positions 1-20 (MSSAIKILALLMVLVALAQA) are cleaved as a signal peptide. Residues 21 to 44 (KPRKDYRAYPDFDDKSVILEDDKR) constitute a propeptide that is removed on maturation. F81 is modified (phenylalanine amide).

Post-translationally, contains 3 disulfide bonds.

It is found in the secreted. The protein localises to the nematocyst. In vivo, induces immediate paralysis on shrimps (C.multidentata), followed by death when high doses are injected. No activity is observed when injected into fly larvae (M.domestica). This Epiactis japonica (Sea anemone) protein is Toxin CjTL8.